A 261-amino-acid chain; its full sequence is MAHQAHSYHMVDPSPWPIFGAITALLTTSGLIMWFHYNSIALLTAGLLSMLLVMIQWWRDVVRESTFQGHHTPTVQKGLRYGMILFITSEAFFFLGFFWAFFHSSLAPTPELGGQWPPTGIKPLNPLEVPLLNTAILLASGVTVTWAHHSITEGNRKQAIHALTLTILLGFYFTALQAMEYHEASFSIADSVYGSTFFVATGFHGLHVIIGSSFLTICLLRLIKFHFTSNHHFGFEAAAWYWHFVDIIWLFLYMSMYWWGS.

At 1-15 the chain is on the mitochondrial matrix side; that stretch reads MAHQAHSYHMVDPSP. Residues 16 to 34 form a helical membrane-spanning segment; that stretch reads WPIFGAITALLTTSGLIMW. Residues 35–40 lie on the Mitochondrial intermembrane side of the membrane; sequence FHYNSI. A helical transmembrane segment spans residues 41-66; it reads ALLTAGLLSMLLVMIQWWRDVVREST. Residues 67–72 are Mitochondrial matrix-facing; that stretch reads FQGHHT. The helical transmembrane segment at 73–105 threads the bilayer; that stretch reads PTVQKGLRYGMILFITSEAFFFLGFFWAFFHSS. Residues 106-128 are Mitochondrial intermembrane-facing; it reads LAPTPELGGQWPPTGIKPLNPLE. A helical membrane pass occupies residues 129–152; sequence VPLLNTAILLASGVTVTWAHHSIT. Residues 153-155 are Mitochondrial matrix-facing; it reads EGN. The helical transmembrane segment at 156–183 threads the bilayer; the sequence is RKQAIHALTLTILLGFYFTALQAMEYHE. At 184 to 190 the chain is on the mitochondrial intermembrane side; sequence ASFSIAD. Residues 191-223 traverse the membrane as a helical segment; that stretch reads SVYGSTFFVATGFHGLHVIIGSSFLTICLLRLI. The Mitochondrial matrix segment spans residues 224–232; the sequence is KFHFTSNHH. Residues 233 to 256 traverse the membrane as a helical segment; sequence FGFEAAAWYWHFVDIIWLFLYMSM. The Mitochondrial intermembrane segment spans residues 257 to 261; the sequence is YWWGS.

Belongs to the cytochrome c oxidase subunit 3 family. As to quaternary structure, component of the cytochrome c oxidase (complex IV, CIV), a multisubunit enzyme composed of 14 subunits. The complex is composed of a catalytic core of 3 subunits MT-CO1, MT-CO2 and MT-CO3, encoded in the mitochondrial DNA, and 11 supernumerary subunits COX4I, COX5A, COX5B, COX6A, COX6B, COX6C, COX7A, COX7B, COX7C, COX8 and NDUFA4, which are encoded in the nuclear genome. The complex exists as a monomer or a dimer and forms supercomplexes (SCs) in the inner mitochondrial membrane with NADH-ubiquinone oxidoreductase (complex I, CI) and ubiquinol-cytochrome c oxidoreductase (cytochrome b-c1 complex, complex III, CIII), resulting in different assemblies (supercomplex SCI(1)III(2)IV(1) and megacomplex MCI(2)III(2)IV(2)).

The protein localises to the mitochondrion inner membrane. It catalyses the reaction 4 Fe(II)-[cytochrome c] + O2 + 8 H(+)(in) = 4 Fe(III)-[cytochrome c] + 2 H2O + 4 H(+)(out). In terms of biological role, component of the cytochrome c oxidase, the last enzyme in the mitochondrial electron transport chain which drives oxidative phosphorylation. The respiratory chain contains 3 multisubunit complexes succinate dehydrogenase (complex II, CII), ubiquinol-cytochrome c oxidoreductase (cytochrome b-c1 complex, complex III, CIII) and cytochrome c oxidase (complex IV, CIV), that cooperate to transfer electrons derived from NADH and succinate to molecular oxygen, creating an electrochemical gradient over the inner membrane that drives transmembrane transport and the ATP synthase. Cytochrome c oxidase is the component of the respiratory chain that catalyzes the reduction of oxygen to water. Electrons originating from reduced cytochrome c in the intermembrane space (IMS) are transferred via the dinuclear copper A center (CU(A)) of subunit 2 and heme A of subunit 1 to the active site in subunit 1, a binuclear center (BNC) formed by heme A3 and copper B (CU(B)). The BNC reduces molecular oxygen to 2 water molecules using 4 electrons from cytochrome c in the IMS and 4 protons from the mitochondrial matrix. This is Cytochrome c oxidase subunit 3 (MT-CO3) from Coturnix japonica (Japanese quail).